The chain runs to 304 residues: MIKKMKSYINMNSTVTTLGANYLVHTGYFNTISRLKVCTIASYRYYSTSKSDSQSSDLPPVPIFTINNLNNKDSIKSSRILLKDKGGIYSFINTVNNNQYIGSAKDFYLRLNEHLENKKSNIALQKAFTKYGLDKFIFCIYEYFTYESKIISHKALTDLETSYINRFNFDNLYNFKAIATSSLGYKHTEEARLKMVDYYKDKNNHPMFGKTHTEEALGLISKPGELNPMFGKKHSEATKASMSEKKNKYPLGVGIYDLEDNLILKFSNNVELAKYLGISKVTVGKYLNSGLVYNKTYRFKPIQD.

Residues 84 to 175 enclose the GIY-YIG domain; that stretch reads DKGGIYSFIN…RFNFDNLYNF (92 aa).

This sequence to endonucleases of group I introns of fungi and phage.

The protein localises to the mitochondrion. Its function is as follows. Mitochondrial DNA endonuclease involved in intron homing. The protein is Probable intron-encoded endonuclease 1 of Neurospora crassa (strain ATCC 24698 / 74-OR23-1A / CBS 708.71 / DSM 1257 / FGSC 987).